Here is a 252-residue protein sequence, read N- to C-terminus: tRNA (guanine-N(1)-)-methyltransferase (252 aa).

S-adenosyl-L-methionine contacts are provided by residues Gly-116 and 135 to 140 (LGDYVL).

Belongs to the RNA methyltransferase TrmD family. In terms of assembly, homodimer.

Its subcellular location is the cytoplasm. It catalyses the reaction guanosine(37) in tRNA + S-adenosyl-L-methionine = N(1)-methylguanosine(37) in tRNA + S-adenosyl-L-homocysteine + H(+). Specifically methylates guanosine-37 in various tRNAs. This is tRNA (guanine-N(1)-)-methyltransferase from Limosilactobacillus fermentum (strain NBRC 3956 / LMG 18251) (Lactobacillus fermentum).